Consider the following 273-residue polypeptide: Alkaline ceramidase 1 (273 aa).

Over 1–36 (MHVPGTRAKMSSIFAYQSSEVDWCESNFQHSELVAE) the chain is Lumenal. Ca(2+) is bound by residues aspartate 22, tryptophan 23, glutamate 25, asparagine 27, and glutamate 36. Residues 37 to 57 (FYNTFSNVFFLIFGPLMMFLM) form a helical membrane-spanning segment. Residues 58 to 72 (HPYAQKRTRCFYGVS) are Cytoplasmic-facing. 2 consecutive transmembrane segments (helical) span residues 73-93 (VLFM…SFLG) and 94-114 (QLLD…VWLP). Histidine 86 is a Zn(2+) binding site. Topologically, residues 115-126 (RCYFPKFVKGNR) are cytoplasmic. A helical transmembrane segment spans residues 127–147 (FYFSCLVTITTIISTFLTFVK). Over 148-149 (PT) the chain is Lumenal. Residues 150 to 167 (VNAYALNSIAIHILYIVR) form a helical membrane-spanning segment. Over 168–177 (TEYKKIRDDD) the chain is Cytoplasmic. Residues 178–198 (LRHLIAVSVVLWAAALTSWIS) traverse the membrane as a helical segment. Topologically, residues 199–215 (DRVLCSFWQRIHFYYLH) are lumenal. Residues histidine 215 and histidine 219 each contribute to the Zn(2+) site. Residues 216–236 (SIWHVLISITFPYGIVTMALV) form a helical membrane-spanning segment. At 237–273 (DAKYEMPDKTLKVHYWPRDSWVIGLPYVEIQENDKNC) the chain is on the cytoplasmic side.

The protein belongs to the alkaline ceramidase family. Requires Zn(2+) as cofactor. Highly expressed in skin. Weakly or not expressed in other tissues. Expressed by granular layer of interfollicular epidermis, sebaceous glands and infundibulum.

It localises to the endoplasmic reticulum membrane. It carries out the reaction an N-acylsphing-4-enine + H2O = sphing-4-enine + a fatty acid. It catalyses the reaction N-tetracosanoyl-sphing-4-enine + H2O = tetracosanoate + sphing-4-enine. The catalysed reaction is an N-acylsphinganine + H2O = sphinganine + a fatty acid. The enzyme catalyses N-(9Z-octadecenoyl)-sphing-4-enine + H2O = sphing-4-enine + (9Z)-octadecenoate. It carries out the reaction N-(15Z-tetracosenoyl)-sphing-4-enine + H2O = (15Z)-tetracosenoate + sphing-4-enine. The protein operates within lipid metabolism; sphingolipid metabolism. With respect to regulation, inhibited by sphingosine. Inhibited by Mn(2+), Zn(2+), and Cu(2+) in a dose-dependent manner. Slightly activated by Ca(2+) in a dose-dependent manner. In terms of biological role, endoplasmic reticulum ceramidase that catalyzes the hydrolysis of ceramides into sphingosine and free fatty acids at alkaline pH. Ceramides, sphingosine, and its phosphorylated form sphingosine-1-phosphate are bioactive lipids that mediate cellular signaling pathways regulating several biological processes including cell proliferation, apoptosis and differentiation. Exhibits a strong substrate specificity towards the natural stereoisomer of ceramides with D-erythro-sphingosine as a backbone and has a higher activity towards very long-chain unsaturated fatty acids like the C24:1-ceramide. May also hydrolyze dihydroceramides to produce dihydrosphingosine. ACER1 is a skin-specific ceramidase that regulates the levels of ceramides, sphingosine and sphingosine-1-phosphate in the epidermis, mediates the calcium-induced differentiation of epidermal keratinocytes and more generally plays an important role in skin homeostasis. The protein is Alkaline ceramidase 1 of Mus musculus (Mouse).